Consider the following 310-residue polypeptide: Protease HtpX homolog (310 aa).

The next 2 helical transmembrane spans lie at 16–36 (NAVL…VDAI) and 55–75 (IFPT…LVCI). A Zn(2+)-binding site is contributed by His-166. Residue Glu-167 is part of the active site. His-170 provides a ligand contact to Zn(2+). 2 consecutive transmembrane segments (helical) span residues 182 to 202 (VGIL…FFMG) and 214 to 234 (MILW…QMYL). Residue Glu-239 participates in Zn(2+) binding.

Belongs to the peptidase M48B family. Zn(2+) serves as cofactor.

It localises to the cell inner membrane. In Helicobacter pylori (strain J99 / ATCC 700824) (Campylobacter pylori J99), this protein is Protease HtpX homolog.